The chain runs to 1212 residues: DNA-directed RNA polymerase subunit beta (1212 aa).

Residues 1176–1195 (QQEKKKLAEEAAKKDDKSAE) show a composition bias toward basic and acidic residues. The interval 1176–1212 (QQEKKKLAEEAAKKDDKSAEPVDQSDSSTSSDDKVSK) is disordered.

Belongs to the RNA polymerase beta chain family. In terms of assembly, the RNAP catalytic core consists of 2 alpha, 1 beta, 1 beta' and 1 omega subunit. When a sigma factor is associated with the core the holoenzyme is formed, which can initiate transcription.

The catalysed reaction is RNA(n) + a ribonucleoside 5'-triphosphate = RNA(n+1) + diphosphate. Its function is as follows. DNA-dependent RNA polymerase catalyzes the transcription of DNA into RNA using the four ribonucleoside triphosphates as substrates. The protein is DNA-directed RNA polymerase subunit beta of Lactobacillus gasseri (strain ATCC 33323 / DSM 20243 / BCRC 14619 / CIP 102991 / JCM 1131 / KCTC 3163 / NCIMB 11718 / NCTC 13722 / AM63).